A 1161-amino-acid chain; its full sequence is Nardilysin (1161 aa).

The N-terminal stretch at 1-18 is a signal peptide; that stretch reads MLRRVAVAAVFATGRKLR. Disordered regions lie at residues 42-105 and 130-218; these read KPFP…KSPS and VEGK…KKTT. Phosphoserine is present on residues Ser-85, Ser-91, and Ser-93. Acidic residues predominate over residues 138-209; sequence TDEEEEEEEE…EENELEELEE (72 aa). Residue His-244 coordinates Zn(2+). Glu-247 functions as the Proton acceptor in the catalytic mechanism. Zn(2+) contacts are provided by His-248 and Glu-325.

Belongs to the peptidase M16 family. Interacts with BACE1 and NRG1. Zn(2+) is required as a cofactor. Testis, and in a lower level in brain, heart and adrenal glands.

Its subcellular location is the mitochondrion. It localises to the cell projection. The protein localises to the dendrite. It carries out the reaction Hydrolysis of polypeptides, preferably at -Xaa-|-Arg-Lys-, and less commonly at -Arg-|-Arg-Xaa-, in which Xaa is not Arg or Lys.. Its function is as follows. Cleaves peptide substrates on the N-terminus of arginine residues in dibasic pairs. Is a critical activator of BACE1- and ADAM17-mediated pro-neuregulin ectodomain shedding, involved in the positive regulation of axonal maturation and myelination. Required for proper functioning of 2-oxoglutarate dehydrogenase (OGDH). The protein is Nardilysin of Rattus norvegicus (Rat).